Consider the following 225-residue polypeptide: uncharacterized protein (225 aa).

Residues 181–203 traverse the membrane as a helical segment; the sequence is INIFVVFMFIIYLLFYIISSTVF.

The protein localises to the cell membrane. This is an uncharacterized protein from Bacillus anthracis.